The following is a 180-amino-acid chain: UPF0227 protein Shew_1627 (180 aa).

This sequence belongs to the UPF0227 family.

This Shewanella loihica (strain ATCC BAA-1088 / PV-4) protein is UPF0227 protein Shew_1627.